A 943-amino-acid chain; its full sequence is MSSVSSDIDGPPETKRFRIDVDTQVGIDTPSVSTNCAPPVAGEASQDGQSPAAPSSASYRSSNSSVISSSESPIKDEDVDVHDGQDDTEDIAMDVSGSTGSIVNNSEIFEMLNKTFGGVFNCDLEGIMRPSALMHPSSPPTPIQSAGIPGALAVAQSPAAQLFSGDDWSWHRNPAASIRSGGTNKQTPVWKYFVYNKTENLSRCIVGDCTYMLKGPHTSTLACHLKKHTREYSEFQKLKTEYSRTKLDQQPKIPDGAPHPLTLQTQNTPRQTGSPASTCNTNSNTSSSVSSGSGIGSGSGSTMDLSMKKPKKEPSSAKLNEMLFNGLRQATNNSNGSPPTTPHAPQLPNIPSFVTNMMLQMNPLHMMLAQSLPGATPPTPTSSNAGLNALQQAGLTLAANGQIIQSKKWRNDDKKQKELCTKFALALATSHVDFEVVQNPLWKEVFEMAQPKFSIPTESQYEHIVNSTSHKLIQSLKSQLSASKKLNLLLDITKITADISRVTVSVALTGGAGNSYETQVILLAFRNINGNQSEDLTAVFEKVLQDYNISPSSINRVICSGLNELAEPAELPKQMDSFSSRLANCFKSWLETSPTVEVLKKNVYAMLVSYLTVPAAIQLASQMLKAKFEVPLTEPFHVIVEHLVAHRDIYQMNMEGITLISEREWNKVTGIHHLMNIFKPFMTYSTDMTTVDTVIPTIVQIQNVLEKDIYHLGDIGSDLLTSLKQTVAPIMNPEHENFDSTYIQATALNPQLAVTLTSDQMTTAKSLIETEISRRTKKMRKAQSDKKLAMGVDSLLANVMRKNDGGSDGGCETALAIYGDLFQSITGNSSESKENIVNQYFDEISSTTSVESMFMLRTFGNPMQAPLSYWKSCSSRCSELSDLATELLSIPIFTLTAERVLSFSPDSSSLNTNLILTNLDSTDQFEKQVLLRFNRQIVSKLFN.

Positions 1 to 99 are disordered; the sequence is MSSVSSDIDG…DIAMDVSGST (99 aa). Over residues 12–21 the composition is skewed to basic and acidic residues; sequence PETKRFRIDV. Residues 50-72 show a composition bias toward low complexity; it reads SPAAPSSASYRSSNSSVISSSES. Basic and acidic residues predominate over residues 73–85; that stretch reads PIKDEDVDVHDGQ. The BED-type; degenerate zinc finger occupies 184–235; that stretch reads NKQTPVWKYFVYNKTENLSRCIVGDCTYMLKGPHTSTLACHLKKHTREYSEF. 2 disordered regions span residues 242–315 and 328–348; these read YSRT…KEPS and RQAT…PQLP. Over residues 262–276 the composition is skewed to polar residues; it reads TLQTQNTPRQTGSPA. The span at 277–292 shows a compositional bias: low complexity; sequence STCNTNSNTSSSVSSG. Residues 328–338 show a composition bias toward polar residues; sequence RQATNNSNGSP.

In terms of tissue distribution, expressed in distal tip cells and in germline cells.

Its subcellular location is the nucleus. It localises to the cytoplasm. Regulates the timing and orientation of distal tip cell migration during gonadal development. May act in parallel to cacn-1 and Rac GTPases to control the anterior and posterior migration of distal tip cells. This is Zinc finger BED domain-containing protein 39 from Caenorhabditis elegans.